The primary structure comprises 653 residues: DNA polymerase (653 aa).

It belongs to the DNA polymerase type-B family.

The catalysed reaction is DNA(n) + a 2'-deoxyribonucleoside 5'-triphosphate = DNA(n+1) + diphosphate. Functionally, replicates viral genomic DNA. The protein is DNA polymerase of Acidianus convivator (ABV).